Reading from the N-terminus, the 59-residue chain is Potassium channel toxin alpha-KTx 3.5 (59 aa).

An N-terminal signal peptide occupies residues 1–22 (MKVFSAVLIILFVCSMIIGINA). 3 disulfides stabilise this stretch: Cys29–Cys49, Cys35–Cys54, and Cys39–Cys56. The interaction with Ca(2+)-activated K(+) channels stretch occupies residues 47 to 54 (GKCMNGKC).

Belongs to the short scorpion toxin superfamily. Potassium channel inhibitor family. Alpha-KTx 03 subfamily. Expressed by the venom gland.

Its subcellular location is the secreted. Has also been shown to inhibit with high potency Kv1.3/KCNA3 and with low potency Kv1.1/KCNA1 and Kv1.2/KCNA2 voltage-gated potassium channels. Also binds and inhibits the molluscan calcium-activated potassium channels KCa (Kd=135 nM). In Androctonus australis (Sahara scorpion), this protein is Potassium channel toxin alpha-KTx 3.5 (KTX2).